Here is a 431-residue protein sequence, read N- to C-terminus: Mothers against decapentaplegic homolog 6 (431 aa).

A compositionally biased stretch (basic residues) spans 1 to 15 (MFRSKRSGLVRRLWR). The tract at residues 1-95 (MFRSKRSGLV…SPPGPGGGEA (95 aa)) is disordered. Polar residues predominate over residues 29 to 38 (GQSSERNATA). The segment covering 71–90 (PELPPPPPPPPPGGASPPGP) has biased composition (pro residues). The region spanning 85–209 (ASPPGPGGGE…FSRLCGPESP (125 aa)) is the MH1 domain. The Zn(2+) site is built by Cys-139, Cys-182, Cys-194, and His-199. The segment covering 235–245 (TETEATNSPNV) has biased composition (polar residues). The interval 235–258 (TETEATNSPNVTPGEFSDASTSPD) is disordered. Residues 265-431 (WCNVAYWEHR…WLEILLSNNR (167 aa)) form the MH2 domain.

It belongs to the dwarfin/SMAD family. In terms of tissue distribution, developing heart, eyes and limbs.

Its subcellular location is the nucleus. Functionally, transforming growth factor-beta superfamily receptors signaling occurs through the Smad family of intracellular mediators. SMAD6 is an inhibitory Smad (i-Smad) that negatively regulates signaling downstream of type I transforming growth factor-beta. Acts as a mediator of TGF-beta and BMP anti-inflammatory activities. Suppresses IL1R-TLR signaling through its direct interaction with PEL1, preventing NF-kappa-B activation, nuclear transport and NF-kappa-B-mediated expression of pro-inflammatory genes. Blocks the BMP-SMAD1 signaling pathway by competing with SMAD4 for receptor-activated SMAD1-binding. Binds to regulatory elements in target promoter regions. The polypeptide is Mothers against decapentaplegic homolog 6 (SMAD6) (Gallus gallus (Chicken)).